A 72-amino-acid polypeptide reads, in one-letter code: uncharacterized protein (72 aa).

A disordered region spans residues 51-72 (AKGGRQRGETVVVDDQCKEHKE).

This sequence belongs to the YiiE family.

This is an uncharacterized protein from Escherichia coli O6:K15:H31 (strain 536 / UPEC).